Consider the following 124-residue polypeptide: Small ribosomal subunit protein eS25 (124 aa).

The segment covering 1–22 (PPKDDKKKKDAGKSAKKDKDPV) has biased composition (basic and acidic residues). The tract at residues 1 to 37 (PPKDDKKKKDAGKSAKKDKDPVNKSGGKAKKKKWSKG) is disordered. Positions 27 to 37 (GKAKKKKWSKG) are enriched in basic residues. The residue at position 42 (lysine 42) is an N6-acetyllysine. An N6-acetyllysine; alternate modification is found at lysine 51. Lysine 51 carries the post-translational modification N6-succinyllysine; alternate. N6-acetyllysine occurs at positions 59 and 65. The residue at position 93 (lysine 93) is an N6-acetyllysine; alternate. Lysine 93 bears the N6-succinyllysine; alternate mark.

Belongs to the eukaryotic ribosomal protein eS25 family. Component of the small ribosomal subunit.

Its subcellular location is the cytoplasm. Its function is as follows. Component of the small ribosomal subunit. The ribosome is a large ribonucleoprotein complex responsible for the synthesis of proteins in the cell. The protein is Small ribosomal subunit protein eS25 (RPS25) of Oryctolagus cuniculus (Rabbit).